A 678-amino-acid polypeptide reads, in one-letter code: Transcriptional regulator CRZ1 (678 aa).

Residues 1–21 (MSFSNGNMASYMTSSNGEEQS) are compositionally biased toward polar residues. Disordered stretches follow at residues 1-50 (MSFS…SHTF) and 159-195 (TPAD…NYSD). Residues 34 to 47 (YRRNNFRNSSNSGS) show a composition bias toward low complexity. The segment covering 166-195 (RPSLTNQFLSPRSNYDGTTRSSGIDSNYSD) has biased composition (polar residues). At T170 the chain carries Phosphothreonine. Phosphoserine is present on residues S175, S245, and S385. The disordered stretch occupies residues 401–486 (KLKKSRRRSS…SNFNEDNNNN (86 aa)). Low complexity predominate over residues 410 to 428 (SQTSNNSFTSRRSSRSRSI). Basic and acidic residues-rich tracts occupy residues 429–446 (SPDE…KLLE) and 457–467 (DNNRERYDNDS). Positions 472 to 486 (NTINSSNFNEDNNNN) are enriched in low complexity. C2H2-type zinc fingers lie at residues 569-591 (FACD…LRTH) and 597-619 (FICS…EDLH).

In terms of processing, phosphorylated. Dephosphorylated by calcineurin which leads to rapid translocation from the cytoplasm to the nucleus. Phosphorylated by the cyclin-CDK PHO80-PHO85.

The protein localises to the nucleus. The protein resides in the cytoplasm. Functionally, involved in the regulation of calcium ion homeostasis. Binds to the calcineurin-dependent response element. Transcriptionally regulates PMC1, PMR1, PMR2A and FKS2. This chain is Transcriptional regulator CRZ1 (CRZ1), found in Saccharomyces cerevisiae (strain ATCC 204508 / S288c) (Baker's yeast).